A 258-amino-acid polypeptide reads, in one-letter code: Small ribosomal subunit protein uS2 (258 aa).

The segment at 234 to 258 is disordered; the sequence is ETANAEEAMQKAAAVEAAAEAAPAQ. Low complexity predominate over residues 236-258; that stretch reads ANAEEAMQKAAAVEAAAEAAPAQ.

Belongs to the universal ribosomal protein uS2 family.

The chain is Small ribosomal subunit protein uS2 from Desulfovibrio desulfuricans (strain ATCC 27774 / DSM 6949 / MB).